The following is a 74-amino-acid chain: UPF0352 protein MS1910 (74 aa).

This sequence belongs to the UPF0352 family.

The sequence is that of UPF0352 protein MS1910 from Mannheimia succiniciproducens (strain KCTC 0769BP / MBEL55E).